Here is a 128-residue protein sequence, read N- to C-terminus: Probable cystatin-15 (128 aa).

The N-terminal stretch at 1 to 20 (MFWKLPLLLGLLALGPHVCS) is a signal peptide. A disulfide bridge connects residues C82 and C92. N104 is a glycosylation site (N-linked (GlcNAc...) asparagine). The cysteines at positions 105 and 125 are disulfide-linked.

The protein belongs to the cystatin family.

It localises to the secreted. This chain is Probable cystatin-15, found in Bos taurus (Bovine).